Consider the following 174-residue polypeptide: Protein RESISTANCE TO POWDERY MILDEW 8.2 (174 aa).

Positions 1-153 (MIAEVAAGGA…IMPQPKFEIH (153 aa)) constitute an RPW8 domain. The helical transmembrane segment at 7 to 23 (AGGALGLALSVLHEAVK) threads the bilayer. Positions 68 to 145 (VNKRLKLLLE…EISTKLDKIM (78 aa)) form a coiled coil.

This sequence belongs to the plant RPW8 protein family.

Its subcellular location is the membrane. Functionally, disease resistance (R) protein that induces localized, salicylic acid-dependent defenses. Confers resistance to powdery mildew (e.g. Erysiphe cichoracearum UCSC1). This chain is Protein RESISTANCE TO POWDERY MILDEW 8.2, found in Arabidopsis thaliana (Mouse-ear cress).